The sequence spans 158 residues: Molybdopterin synthase catalytic subunit (158 aa).

Residues 107 to 108 (HR), K123, and 130 to 132 (KKE) contribute to the substrate site.

The protein belongs to the MoaE family. MOCS2B subfamily. As to quaternary structure, heterotetramer; composed of 2 small (mocs2s) and 2 large (mocs2l) subunits.

The protein localises to the cytoplasm. It catalyses the reaction 2 [molybdopterin-synthase sulfur-carrier protein]-C-terminal-Gly-aminoethanethioate + cyclic pyranopterin phosphate + H2O = molybdopterin + 2 [molybdopterin-synthase sulfur-carrier protein]-C-terminal Gly-Gly + 2 H(+). Its pathway is cofactor biosynthesis; molybdopterin biosynthesis. Functionally, catalytic subunit of the molybdopterin synthase complex, a complex that catalyzes the conversion of precursor Z into molybdopterin. Acts by mediating the incorporation of 2 sulfur atoms from thiocarboxylated mocs2s into precursor Z to generate a dithiolene group. The polypeptide is Molybdopterin synthase catalytic subunit (mocs2l) (Dictyostelium discoideum (Social amoeba)).